The primary structure comprises 1153 residues: Cingulin (1153 aa).

Positions 1–342 are head; the sequence is MAEPRGPVDH…LVMTTGSAKV (342 aa). Residues 17–37 form a disordered region; the sequence is ITEPAGDAQMRTGRRPAKDAR. The ZIM motif lies at 38–52; the sequence is ANTYGVAVRVQGIAG. Residues 44 to 57 are interaction with TJP1/ZO1; that stretch reads AVRVQGIAGQPFVV. A phosphoserine mark is found at Ser86, Ser126, Ser128, Ser131, Ser146, Ser205, Ser208, and Ser324. 2 disordered regions span residues 131 to 151 and 177 to 253; these read SLLGPAPLGPGHRSTSLLELG and DRHQ…SRAR. Residues 207–220 show a composition bias toward basic and acidic residues; the sequence is DSRHLRDPPEDRRS. The stretch at 343 to 1110 forms a coiled coil; sequence LAGQGELAQK…ALEKDSWRKA (768 aa). At Lys562 the chain carries N6-acetyllysine. Disordered stretches follow at residues 755 to 796, 823 to 861, and 1110 to 1131; these read AQRG…QKRL, QSQLEDYKEKSRREVADAQRQAKEWASEAEKSSGGLSRL, and AARSAAESSLQQEGLSSDEEFD. Composition is skewed to basic and acidic residues over residues 772-796 and 827-853; these read ALEEEGKQREALRRGKAELEEQKRL and EDYKEKSRREVADAQRQAKEWASEAEK. Residues 1111-1153 are tail; that stretch reads ARSAAESSLQQEGLSSDEEFDGVYNPNSIASLLTESGLQTSSC. Over residues 1115 to 1124 the composition is skewed to polar residues; the sequence is AESSLQQEGL. A phosphoserine mark is found at Ser1125 and Ser1126.

The protein belongs to the cingulin family. Homodimer. Interacts with TJP1/ZO1 and SPEF1.

It localises to the cell junction. Its subcellular location is the tight junction. Its function is as follows. Probably plays a role in the formation and regulation of the tight junction (TJ) paracellular permeability barrier. The sequence is that of Cingulin from Sorex araneus (Eurasian common shrew).